The primary structure comprises 230 residues: Complex I assembly factor TMEM126B, mitochondrial (230 aa).

The next 4 membrane-spanning stretches (helical) occupy residues 70–92 (LNIH…ANLV), 107–126 (YASL…KLFV), 139–161 (SCVL…ALAF), and 196–218 (AMAI…HYNI).

This sequence belongs to the TMEM126 family. In terms of assembly, part of the mitochondrial complex I assembly/MCIA complex that comprises at least the core subunits TMEM126B, NDUFAF1, ECSIT and ACAD9 and complement subunits such as COA1 and TMEM186. Associates with the intermediate 370 kDa subcomplex of incompletely assembled complex I. Interacts with TMEM70.

It localises to the mitochondrion membrane. In terms of biological role, as part of the MCIA complex, involved in the assembly of the mitochondrial complex I. Participates in constructing the membrane arm of complex I. The polypeptide is Complex I assembly factor TMEM126B, mitochondrial (Mus musculus (Mouse)).